The chain runs to 30 residues: Cyclotide mech-1 (30 aa).

Residues 1-30 (GVIPCGESCVFIPCINKKKCSCKNKVCYRD) constitute a cross-link (cyclopeptide (Gly-Asp)). 3 disulfide bridges follow: Cys5/Cys20, Cys9/Cys22, and Cys14/Cys27.

Post-translationally, this is a cyclic peptide. In terms of processing, contains 3 disulfide bonds.

Functionally, probably participates in a plant defense mechanism (Potential). Binds to and induces leakage in phospholipd membranes, particularly ones containing 1-palmitoyl-2-oleophosphatidylethanolamine (POPE). Not active against Gram-negative bacterium E.coli ATCC 25922 or Gram-positive bacterium S.aureus ATCC 25923 up to a concentration of 64 uM. The polypeptide is Cyclotide mech-1 (Melicytus chathamicus (Chatham Island mahoe)).